Consider the following 300-residue polypeptide: Ribosomal protein bS6--L-glutamate ligase (300 aa).

In terms of domain architecture, ATP-grasp spans 104-287 (LQLLARQGID…IAGRMIQWIE (184 aa)). ATP is bound by residues lysine 141, 178–179 (EY), aspartate 187, and 211–213 (RSN). 3 residues coordinate Mg(2+): aspartate 248, glutamate 260, and asparagine 262. Mn(2+)-binding residues include aspartate 248, glutamate 260, and asparagine 262.

The protein belongs to the RimK family. The cofactor is Mg(2+). It depends on Mn(2+) as a cofactor.

Functionally, an L-glutamate ligase that catalyzes the ATP-dependent post-translational addition of glutamate residues to the C-terminus of ribosomal protein bS6 (RpsF). Is also able to catalyze the synthesis of poly-alpha-glutamate in vitro, via ATP hydrolysis from unprotected glutamate as substrate. The number of glutamate residues added to either RpsF or to poly-alpha-glutamate changes with pH. The sequence is that of Ribosomal protein bS6--L-glutamate ligase from Salmonella schwarzengrund (strain CVM19633).